Here is a 37-residue protein sequence, read N- to C-terminus: Cytochrome b6-f complex subunit 5 (37 aa).

Residues 5 to 25 traverse the membrane as a helical segment; sequence LLSGIVLGLISITSAGLFVTA.

The protein belongs to the PetG family. The 4 large subunits of the cytochrome b6-f complex are cytochrome b6, subunit IV (17 kDa polypeptide, PetD), cytochrome f and the Rieske protein, while the 4 small subunits are PetG, PetL, PetM and PetN. The complex functions as a dimer.

Its subcellular location is the plastid. The protein localises to the chloroplast thylakoid membrane. Its function is as follows. Component of the cytochrome b6-f complex, which mediates electron transfer between photosystem II (PSII) and photosystem I (PSI), cyclic electron flow around PSI, and state transitions. PetG is required for either the stability or assembly of the cytochrome b6-f complex. The protein is Cytochrome b6-f complex subunit 5 of Psilotum nudum (Whisk fern).